Here is a 102-residue protein sequence, read N- to C-terminus: Small ribosomal subunit protein uS10 (102 aa).

The protein belongs to the universal ribosomal protein uS10 family. As to quaternary structure, part of the 30S ribosomal subunit.

Functionally, involved in the binding of tRNA to the ribosomes. The protein is Small ribosomal subunit protein uS10 of Parafrankia sp. (strain EAN1pec).